A 187-amino-acid chain; its full sequence is Avirulence protein ATR39-2 (187 aa).

An N-terminal signal peptide occupies residues 1–20 (MVKCTPLLALTVIVSAGSDA). The short motif at 49–66 (RVLRASDVPNEVAAGESR) is the RxLR-dEER element.

Belongs to the RxLR effector family.

The protein localises to the secreted. It is found in the host cell. Its function is as follows. Secreted effector that acts as an elicitor of hypersensitive response (HR) specifically on plants carrying defense protein RPP39. The allele ATR39-1 is recognized by RPP39, whereas the ATR39-2 allele is nor recognized. This is Avirulence protein ATR39-2 from Hyaloperonospora arabidopsidis (strain Emoy2) (Downy mildew agent).